The primary structure comprises 517 residues: Crotonobetaine/carnitine--CoA ligase (517 aa).

The protein belongs to the ATP-dependent AMP-binding enzyme family.

The enzyme catalyses 4-(trimethylamino)butanoate + ATP + CoA = 4-(trimethylamino)butanoyl-CoA + AMP + diphosphate. It carries out the reaction crotonobetaine + ATP + CoA = crotonobetainyl-CoA + AMP + diphosphate. The catalysed reaction is (R)-carnitine + ATP + CoA = (R)-carnitinyl-CoA + AMP + diphosphate. The protein operates within amine and polyamine metabolism; carnitine metabolism. In terms of biological role, catalyzes the transfer of CoA to carnitine, generating the initial carnitinyl-CoA needed for the CaiB reaction cycle. Also has activity toward crotonobetaine and gamma-butyrobetaine. The sequence is that of Crotonobetaine/carnitine--CoA ligase from Escherichia coli O17:K52:H18 (strain UMN026 / ExPEC).